Consider the following 149-residue polypeptide: MHCPFCSENDTKVIDSRLVADGHQVRRRRQCLACNERFTTFETAELVMPRVIKSNGNREPFDEEKMIGGLQRALEKRPVSADAIELAISTIKSKLRATGEREVPSKLIGNLVMEQLKVLDKVAYIRFASVYRSFEDVREFGEEIAKLQD.

A zinc finger lies at C3–C34. The 91-residue stretch at P49–E139 folds into the ATP-cone domain.

The protein belongs to the NrdR family. It depends on Zn(2+) as a cofactor.

Negatively regulates transcription of bacterial ribonucleotide reductase nrd genes and operons by binding to NrdR-boxes. The chain is Transcriptional repressor NrdR from Vibrio cholerae serotype O1 (strain ATCC 39541 / Classical Ogawa 395 / O395).